Here is a 720-residue protein sequence, read N- to C-terminus: Polyribonucleotide nucleotidyltransferase (720 aa).

Residues D484 and D490 each coordinate Mg(2+). A KH domain is found at 551 to 610; it reads PRMYKISIDPSKIGSVIGSGGKTIRSIIEQTNTTVDIENDGTVVIGATDEASAQKAIKII. One can recognise an S1 motif domain in the interval 620–688; the sequence is GSVYTGKVTR…SQGRINLSRR (69 aa). A disordered region spans residues 697–720; sequence PISRNRDSQPRRSGPFRPQDRSNS.

The protein belongs to the polyribonucleotide nucleotidyltransferase family. The cofactor is Mg(2+).

It is found in the cytoplasm. The catalysed reaction is RNA(n+1) + phosphate = RNA(n) + a ribonucleoside 5'-diphosphate. Involved in mRNA degradation. Catalyzes the phosphorolysis of single-stranded polyribonucleotides processively in the 3'- to 5'-direction. The polypeptide is Polyribonucleotide nucleotidyltransferase (Dehalococcoides mccartyi (strain ATCC BAA-2266 / KCTC 15142 / 195) (Dehalococcoides ethenogenes (strain 195))).